Reading from the N-terminus, the 1334-residue chain is Aldehyde oxidase 3 (1334 aa).

The 88-residue stretch at 8–95 (DELIFFVNGK…GAAVTTVEGI (88 aa)) folds into the 2Fe-2S ferredoxin-type domain. Residues C47, C52, C55, and C77 each coordinate [2Fe-2S] cluster. Position 116 (Q116) interacts with Mo-molybdopterin. Residues C117, C120, C152, and C154 each contribute to the [2Fe-2S] cluster site. In terms of domain architecture, FAD-binding PCMH-type spans 236-421 (FRGERTTWIA…ISVFVPLSRK (186 aa)). 264 to 271 (LVIGNTCL) is an FAD binding site. The residue at position 320 (S320) is a Phosphoserine. Residues S354, H358, D367, and L411 each contribute to the FAD site. Positions 801, 1042, and 1198 each coordinate Mo-molybdopterin. E1265 serves as the catalytic Proton acceptor; for azaheterocycle hydroxylase activity.

Belongs to the xanthine dehydrogenase family. In terms of assembly, homodimer. [2Fe-2S] cluster is required as a cofactor. Requires FAD as cofactor. The cofactor is Mo-molybdopterin.

The protein localises to the cytoplasm. The catalysed reaction is an aldehyde + O2 + H2O = a carboxylate + H2O2 + H(+). In terms of biological role, oxidase with broad substrate specificity, oxidizing aromatic azaheterocycles, such as N1-methylnicotinamide and phthalazine, as well as aldehydes, such as benzaldehyde, retinal and pyridoxal. Plays a key role in the metabolism of xenobiotics and drugs containing aromatic azaheterocyclic substituents. Is probably involved in the regulation of reactive oxygen species homeostasis. Is a prominent source of superoxide generation via the one-electron reduction of molecular oxygen. Also catalyzes nitric oxide (NO) production; under anaerobic conditions, reduces nitrite to NO with NADH or aldehyde as electron donor, but under aerobic conditions, NADH is the preferred substrate. These reactions may be catalyzed by several isozymes. The chain is Aldehyde oxidase 3 (Aox3) from Rattus norvegicus (Rat).